Reading from the N-terminus, the 938-residue chain is Isoleucine--tRNA ligase (938 aa).

The short motif at 58-68 (PYANGSIHIGH) is the 'HIGH' region element. Lys183 is modified (N6-acetyllysine). Glu561 provides a ligand contact to L-isoleucyl-5'-AMP. The short motif at 602–606 (KMSKS) is the 'KMSKS' region element. ATP is bound at residue Lys605. Residues Cys901, Cys904, Cys921, and Cys924 each contribute to the Zn(2+) site.

It belongs to the class-I aminoacyl-tRNA synthetase family. IleS type 1 subfamily. Monomer. It depends on Zn(2+) as a cofactor.

The protein resides in the cytoplasm. The enzyme catalyses tRNA(Ile) + L-isoleucine + ATP = L-isoleucyl-tRNA(Ile) + AMP + diphosphate. In terms of biological role, catalyzes the attachment of isoleucine to tRNA(Ile). As IleRS can inadvertently accommodate and process structurally similar amino acids such as valine, to avoid such errors it has two additional distinct tRNA(Ile)-dependent editing activities. One activity is designated as 'pretransfer' editing and involves the hydrolysis of activated Val-AMP. The other activity is designated 'posttransfer' editing and involves deacylation of mischarged Val-tRNA(Ile). The sequence is that of Isoleucine--tRNA ligase from Shigella flexneri.